We begin with the raw amino-acid sequence, 562 residues long: Laccase-2 (562 aa).

The signal sequence occupies residues 1 to 26 (MASAASSLPLLVSSLLLALFALGAHA). Plastocyanin-like domains follow at residues 34 to 150 (DIVM…PAAG) and 160 to 312 (DEAE…YAGV). N39, N53, N72, and N80 each carry an N-linked (GlcNAc...) asparagine glycan. Positions 84 and 86 each coordinate Cu cation. N118 carries N-linked (GlcNAc...) asparagine glycosylation. H129 and H131 together coordinate Cu cation. Residues N189, N244, N300, N328, N376, N386, N421, and N445 are each glycosylated (N-linked (GlcNAc...) asparagine). The region spanning 411–546 (DFPDRPPARF…KMAFLVEDGS (136 aa)) is the Plastocyanin-like 3 domain. 7 residues coordinate Cu cation: H463, H466, H468, H525, C526, H527, and H531.

Belongs to the multicopper oxidase family. Requires Cu cation as cofactor.

It localises to the secreted. Its subcellular location is the extracellular space. The protein localises to the apoplast. It catalyses the reaction 4 hydroquinone + O2 = 4 benzosemiquinone + 2 H2O. Its function is as follows. Lignin degradation and detoxification of lignin-derived products. The polypeptide is Laccase-2 (LAC2) (Oryza sativa subsp. japonica (Rice)).